The following is a 209-amino-acid chain: Protein GrpE (209 aa).

Residues 1 to 18 (MKIFNKDGNKNSKEDTKA) are compositionally biased toward basic and acidic residues. The tract at residues 1-60 (MKIFNKDGNKNSKEDTKAGAENSEAQNSGSSAEEVNKARENPEEASASSEAEKSPEVKCQ) is disordered. Residues 23–33 (SEAQNSGSSAE) are compositionally biased toward polar residues. The span at 50–60 (EAEKSPEVKCQ) shows a compositional bias: basic and acidic residues.

The protein belongs to the GrpE family. Homodimer.

Its subcellular location is the cytoplasm. In terms of biological role, participates actively in the response to hyperosmotic and heat shock by preventing the aggregation of stress-denatured proteins, in association with DnaK and GrpE. It is the nucleotide exchange factor for DnaK and may function as a thermosensor. Unfolded proteins bind initially to DnaJ; upon interaction with the DnaJ-bound protein, DnaK hydrolyzes its bound ATP, resulting in the formation of a stable complex. GrpE releases ADP from DnaK; ATP binding to DnaK triggers the release of the substrate protein, thus completing the reaction cycle. Several rounds of ATP-dependent interactions between DnaJ, DnaK and GrpE are required for fully efficient folding. The sequence is that of Protein GrpE from Methanosarcina barkeri (strain Fusaro / DSM 804).